The primary structure comprises 231 residues: Aquaporin Z (231 aa).

2 consecutive transmembrane segments (helical) span residues 9 to 29 and 34 to 54; these read CFGT…AAGF and IGFA…AFAV. Positions 63 to 65 match the NPA 1 motif; sequence NPA. 3 helical membrane passes run 82-102, 129-149, and 156-176; these read VGYV…LYLI, YSML…LLVI, and FAPA…IHLI. Residues 186–188 carry the NPA 2 motif; it reads NPA. A helical transmembrane segment spans residues 202–222; that stretch reads LEQLWFFWVVPIVGGIIGGLI.

This sequence belongs to the MIP/aquaporin (TC 1.A.8) family. In terms of assembly, homotetramer.

The protein resides in the cell inner membrane. The catalysed reaction is H2O(in) = H2O(out). Functionally, channel that permits osmotically driven movement of water in both directions. It is involved in the osmoregulation and in the maintenance of cell turgor during volume expansion in rapidly growing cells. It mediates rapid entry or exit of water in response to abrupt changes in osmolarity. The protein is Aquaporin Z of Escherichia coli O6:H1 (strain CFT073 / ATCC 700928 / UPEC).